A 349-amino-acid chain; its full sequence is Insulin gene enhancer protein ISL-1 (349 aa).

2 consecutive LIM zinc-binding domains span residues 17-70 (CVGC…CKRD) and 79-133 (CAKC…RADH). The segment at residues 181-240 (TTRVRTVLNEKQLHTLRTCYAANPRPDALMKEQLVEMTGLSPRVIRVWFQNKRCKDKKRS) is a DNA-binding region (homeobox). The tract at residues 262 to 291 (GTPMVAASPERHDGGLQANPVEVQSYQPPW) is LIM-binding domain (LID). A disordered region spans residues 312–349 (VNFSEGGPGSNSTGSEVASMSSQLPDTPNSMVASPIEA). Polar residues predominate over residues 321–343 (SNSTGSEVASMSSQLPDTPNSMV).

At neuronal promoters, displaces LDB1 from LHX3 LIM domain to form a ternary complex in which ISL1 contacts both LHX3 and LDB1; allosteric structural changes in the DNA binding domain of LHX3, induced by the ISL1:LHX3 interaction, may explain differences in sequence specificity of the different complexes. Interacts with LHX3. Interacts (via C-terminus) with POU4F2 (via C-terminus) isoform 1. Interacts with POU3F2. Interacts with POU4F3. Interacts (via N-terminal domain) with MLIP; the interaction represses ISL1 transactivator activity. Interacts with GCN5/KAT2A. Interactions of ISL1 with MLIP1 or KAT2A may be mutually exclusive. Ubiquitinated probably by WWP1 E3 ubiquitin ligase; ubiquitination is followed by protein degradation. In terms of processing, phosphorylated. In terms of tissue distribution, expressed in subsets of neurons of the adrenal medulla and dorsal root ganglion, inner nuclear and ganglion cell layers in the retina, the pineal and some regions of the brain.

The protein localises to the nucleus. In terms of biological role, DNA-binding transcriptional activator. Recognizes and binds to the consensus octamer binding site 5'-ATAATTAA-3' in promoter of target genes. Plays a fundamental role in the gene regulatory network essential for retinal ganglion cell (RGC) differentiation. Cooperates with the transcription factor POU4F2 to achieve maximal levels of expression of RGC target genes and RGC fate specification in the developing retina. Involved in the specification of motor neurons in cooperation with LHX3 and LDB1. Binds to insulin gene enhancer sequences. Essential for heart development. Marker of one progenitor cell population that give rise to the outflow tract, right ventricle, a subset of left ventricular cells, and a large number of atrial cells as well, its function is required for these progenitors to contribute to the heart. Controls the expression of FGF and BMP growth factors in this cell population and is required for proliferation and survival of cells within pharyngeal foregut endoderm and adjacent splanchnic mesoderm as well as for migration of cardiac progenitors into the heart. The chain is Insulin gene enhancer protein ISL-1 (ISL1) from Homo sapiens (Human).